The chain runs to 353 residues: MHLSDFDFDLPETLIATRPARPRSSARLLVAEARGPFRDRRVTDLVDELQPGDRLVLNNTKVIPARLFGTRHRDSAQGPVSAKVEITLLEPASEGWTALAKPLRKLAEGEEIVFSDALRATVAERGADRVRLVFNCTGDDFDAALAQAGAMPLPPYIAAKRAADAQDRDDYQTVFAARKGAVAAPTASLHFDEALLAALRARGVEFSFVTLHVGAGTFLPVKVDDVTTHKMHSEWGEISDQAAAEILATRADGRRVIPVGTTALRLIETAAAQPGGFGPWEGDTDIFIYPGFEFRITDGLMTNFHLPKSTLMMLVSALMGAERIREIYAHAIAQEYRFFSYGDSSLLLPDRGA.

It belongs to the QueA family. As to quaternary structure, monomer.

It localises to the cytoplasm. It catalyses the reaction 7-aminomethyl-7-carbaguanosine(34) in tRNA + S-adenosyl-L-methionine = epoxyqueuosine(34) in tRNA + adenine + L-methionine + 2 H(+). It participates in tRNA modification; tRNA-queuosine biosynthesis. Functionally, transfers and isomerizes the ribose moiety from AdoMet to the 7-aminomethyl group of 7-deazaguanine (preQ1-tRNA) to give epoxyqueuosine (oQ-tRNA). In Dinoroseobacter shibae (strain DSM 16493 / NCIMB 14021 / DFL 12), this protein is S-adenosylmethionine:tRNA ribosyltransferase-isomerase.